The following is a 424-amino-acid chain: Enolase (424 aa).

Glutamine 165 lines the (2R)-2-phosphoglycerate pocket. The Proton donor role is filled by glutamate 207. Residues aspartate 244, glutamate 283, and aspartate 310 each contribute to the Mg(2+) site. Lysine 335, arginine 364, serine 365, and lysine 386 together coordinate (2R)-2-phosphoglycerate. Lysine 335 serves as the catalytic Proton acceptor.

This sequence belongs to the enolase family. Requires Mg(2+) as cofactor.

It is found in the cytoplasm. Its subcellular location is the secreted. The protein resides in the cell surface. It carries out the reaction (2R)-2-phosphoglycerate = phosphoenolpyruvate + H2O. Its pathway is carbohydrate degradation; glycolysis; pyruvate from D-glyceraldehyde 3-phosphate: step 4/5. Catalyzes the reversible conversion of 2-phosphoglycerate (2-PG) into phosphoenolpyruvate (PEP). It is essential for the degradation of carbohydrates via glycolysis. This is Enolase from Chlamydia abortus (strain DSM 27085 / S26/3) (Chlamydophila abortus).